Reading from the N-terminus, the 533-residue chain is Calcium-dependent protein kinase 8 (533 aa).

The disordered stretch occupies residues 1–21 (MGNCCASPGSETGSKKGKPKI). Residue Gly2 is the site of N-myristoyl glycine attachment. The region spanning 57–315 (YDLGREVGRG…AAQVLEHSWI (259 aa)) is the Protein kinase domain. ATP is bound by residues 63–71 (VGRGEFGIT) and Lys86. The Proton acceptor role is filled by Asp181. Ser221 bears the Phosphoserine mark. The autoinhibitory domain stretch occupies residues 321 to 351 (APNVSLGETVKARLKQFSVMNKLKKRALRVI). EF-hand domains lie at 358–394 (EEVAGIKEAFEMMDSKKTGKINLEELKFGLHKLGQQQ), 395–430 (IPDTDLQILMEAADVDGDGTLNYGEFVAVSVHLKKM), 431–466 (ANDEHLHKAFSFFDQNQSDYIEIEELREALNDEVDT), and 467–502 (NSEEVVAAIMQDVDTDKDGRISYEEFAAMMKAGTDW). Ca(2+) is bound by residues Asp371, Thr375, Lys377, Glu382, Asp408, Asp410, Asp412, Thr414, Glu419, Asp444, Asn446, Ser448, Tyr450, Glu455, Asp480, Asp482, Asp484, and Arg486. Phosphoserine is present on Ser488. Glu491 serves as a coordination point for Ca(2+). At Ser526 the chain carries Phosphoserine.

Belongs to the protein kinase superfamily. Ser/Thr protein kinase family. CDPK subfamily.

It is found in the cell membrane. The catalysed reaction is L-seryl-[protein] + ATP = O-phospho-L-seryl-[protein] + ADP + H(+). It catalyses the reaction L-threonyl-[protein] + ATP = O-phospho-L-threonyl-[protein] + ADP + H(+). Its activity is regulated as follows. Activated by calcium. Autophosphorylation may play an important role in the regulation of the kinase activity. In terms of biological role, may play a role in signal transduction pathways that involve calcium as a second messenger. In Arabidopsis thaliana (Mouse-ear cress), this protein is Calcium-dependent protein kinase 8 (CPK8).